We begin with the raw amino-acid sequence, 301 residues long: Acetylglutamate kinase (301 aa).

Substrate-binding positions include 68 to 69 (GG), R90, and N195.

This sequence belongs to the acetylglutamate kinase family. ArgB subfamily.

The protein localises to the cytoplasm. It catalyses the reaction N-acetyl-L-glutamate + ATP = N-acetyl-L-glutamyl 5-phosphate + ADP. It participates in amino-acid biosynthesis; L-arginine biosynthesis; N(2)-acetyl-L-ornithine from L-glutamate: step 2/4. In terms of biological role, catalyzes the ATP-dependent phosphorylation of N-acetyl-L-glutamate. This Pseudomonas aeruginosa (strain LESB58) protein is Acetylglutamate kinase.